We begin with the raw amino-acid sequence, 741 residues long: Mitofusin-1 (741 aa).

At 1 to 584 (MAEPVSPLKH…ASQEELMITL (584 aa)) the chain is on the cytoplasmic side. A part of a helix bundle domain, formed by helices from N-terminal and C-terminal regions region spans residues 9 to 73 (KHFVLAKKAI…LSIIGEVLSR (65 aa)). Positions 72 to 321 (SRRHMKVAFF…ARLQEFQNFE (250 aa)) constitute a Dynamin-type G domain. A G1 motif region spans residues 82–89 (GRTSSGKS). 85–90 (SSGKSS) is a GTP binding site. Positions 108–109 (IT) are G2 motif. Positions 178–181 (DSPG) are G3 motif. 237 to 240 (NRWD) contacts GTP. Residues 237 to 240 (NRWD) form a G4 motif region. A region of interest (G5 motif) is located at residue glutamate 266. GTP contacts are provided by serine 284 and lysine 286. Residues 338–364 (EQHTIRAKQILATVKNIMDSVNLAAED) are part of a helix bundle domain, formed by helices from N-terminal and C-terminal regions. Residues 371–408 (EEREDQIDRLDFIRNQMNLLTLDVKKKIKEVTEEVANK) are a coiled coil. Residues 585–605 (VTGLASVTSRTSMGIIIVGGV) traverse the membrane as a helical segment. Residues 606 to 608 (IWK) are Mitochondrial intermembrane-facing. A helical transmembrane segment spans residues 609-629 (TIGWKLLSVSLTMYGALYLYE). Residues 630–741 (RLSWTTHAKE…QFLPSSNEES (112 aa)) are Cytoplasmic-facing. Positions 679-734 (RLCQQVDITQKQLEEEIARLPKEIDQLEKIQNNSKLLRNKAVQLENELENFTKQFL) form a coiled coil. A part of a helix bundle domain, formed by helices from N-terminal and C-terminal regions region spans residues 703–734 (DQLEKIQNNSKLLRNKAVQLENELENFTKQFL).

Belongs to the TRAFAC class dynamin-like GTPase superfamily. Dynamin/Fzo/YdjA family. Mitofusin subfamily. Homodimer, also in the absence of bound GTP. Forms higher oligomers in the presence of a transition state GTP analog. Forms homomultimers and heteromultimers with MFN2. Oligomerization is essential for mitochondrion fusion. Component of a high molecular weight multiprotein complex. Interacts with VAT1. Interacts with THG1L; THG1L probably functions as a guanyl-nucleotide exchange factor/GEF, activating MFN1. Ubiquitinated by non-degradative ubiquitin by PRKN. Deubiquitination by USP30 inhibits mitochondrial fusion. Ubiquitinated by MARCHF5. When mitochondria are depolarized and dysfunctional, it is ubiquitinated by a SCF (SKP1-CUL1-F-box protein) E3 ubiquitin-protein ligase complex that contains FBXO7 and PRKN. As to expression, detected in kidney and heart (at protein level). Ubiquitous. Expressed at slightly higher level in kidney and heart. Isoform 2 may be overexpressed in some tumors, such as lung cancers.

Its subcellular location is the mitochondrion outer membrane. The protein localises to the cytoplasm. The enzyme catalyses GTP + H2O = GDP + phosphate + H(+). Mitochondrial outer membrane GTPase that mediates mitochondrial clustering and fusion. Membrane clustering requires GTPase activity. It may involve a major rearrangement of the coiled coil domains. Mitochondria are highly dynamic organelles, and their morphology is determined by the equilibrium between mitochondrial fusion and fission events. Overexpression induces the formation of mitochondrial networks (in vitro). Has low GTPase activity. In Homo sapiens (Human), this protein is Mitofusin-1 (MFN1).